Here is a 138-residue protein sequence, read N- to C-terminus: Putative pre-16S rRNA nuclease (138 aa).

Belongs to the YqgF nuclease family.

It localises to the cytoplasm. Functionally, could be a nuclease involved in processing of the 5'-end of pre-16S rRNA. The chain is Putative pre-16S rRNA nuclease from Fusobacterium nucleatum subsp. nucleatum (strain ATCC 25586 / DSM 15643 / BCRC 10681 / CIP 101130 / JCM 8532 / KCTC 2640 / LMG 13131 / VPI 4355).